The following is a 429-amino-acid chain: Glutamate-1-semialdehyde 2,1-aminomutase 2 (429 aa).

Lys268 is subject to N6-(pyridoxal phosphate)lysine.

This sequence belongs to the class-III pyridoxal-phosphate-dependent aminotransferase family. HemL subfamily. As to quaternary structure, homodimer. Pyridoxal 5'-phosphate serves as cofactor.

The protein localises to the cytoplasm. The catalysed reaction is (S)-4-amino-5-oxopentanoate = 5-aminolevulinate. The protein operates within porphyrin-containing compound metabolism; protoporphyrin-IX biosynthesis; 5-aminolevulinate from L-glutamyl-tRNA(Glu): step 2/2. The chain is Glutamate-1-semialdehyde 2,1-aminomutase 2 from Staphylococcus aureus (strain bovine RF122 / ET3-1).